We begin with the raw amino-acid sequence, 521 residues long: GSPVFIAFRSSTKKSVQYDDVPEYKDRLNLSENYTLSISNARISDEKRFVCMLVTEDDVFEAPTVVKVFKQPSKPEIVSKAPFLETEQLQKLGDCISRDSYPEGNITWYRNGKVLQPLEGAVVIIFKKQMDPVTQLYTMTSSLEYKTTKADIQTPFTCSITYYGPSGQKTVHSEQAVFDIYYPTEQVTIQVLPPKNAIKEGDNITLKCLGNGNPPPEEFFFYLPGQPEGIRSSNTYTLPNVRRNATGNYKCSLIDKKSLIASTAITVHYLDLSLNPXGELTKQIGDSLPVSCTISAIRNATVVWMKDNIKLRSSPSFSSLQYQDAGNYVCETALQEVEGLKKRESLTLIVEVKPQIKMTKKTDPSGLSKTIICHVEGFPKPAIQWTITGSGSVINQTEESPYINGRYYSKIIISPEENVTLTCAAENQLERTVNSLNVSAISIPEHDEADEISDENREKVNDQAKLIVGIVVGLLLAALVAGVVYWLYMKKSKTASKHVNKDLGNMEENKKLEENNHKTEA.

The Extracellular portion of the chain corresponds to 1-465 (GSPVFIAFRS…NREKVNDQAK (465 aa)). Residues Asn29, Asn33, Asn105, Asn203, Asn244, Asn299, Asn395, Asn418, and Asn437 are each glycosylated (N-linked (GlcNAc...) asparagine). The region spanning 63-172 (PTVVKVFKQP…YGPSGQKTVH (110 aa)) is the Ig-like V-type 2 domain. Cys95 and Cys158 are oxidised to a cystine. Ig-like C2-type domains follow at residues 183-266 (PTEQ…TAIT), 271-347 (DLSL…ESLT), and 354-439 (PQIK…LNVS). 3 disulfide bridges follow: Cys208-Cys251, Cys292-Cys330, and Cys373-Cys423. Residues 466 to 487 (LIVGIVVGLLLAALVAGVVYWL) form a helical membrane-spanning segment. Residues 488–521 (YMKKSKTASKHVNKDLGNMEENKKLEENNHKTEA) lie on the Cytoplasmic side of the membrane. Residues 500-521 (NKDLGNMEENKKLEENNHKTEA) form a disordered region. Basic and acidic residues predominate over residues 507-521 (EENKKLEENNHKTEA).

As to quaternary structure, homodimer. Interacts (via extracellular domain) with CD6 (via extracellular domain). Homodimerization and interaction with CD6 involve the same region and cannot occur simultaneously. The affinity for CD6 is much higher than the affinity for self-association. Interacts (via glycosylated extracellular domain) with LGALS1 and LGALS3. Interaction with LGALS1 or LGALS3 inhibits interaction with CD6. Glycosylated.

The protein resides in the cell membrane. The protein localises to the cell projection. It is found in the axon. It localises to the dendrite. Cell adhesion molecule that mediates both heterotypic cell-cell contacts via its interaction with CD6, as well as homotypic cell-cell contacts. Promotes T-cell activation and proliferation via its interactions with CD6. Contributes to the formation and maturation of the immunological synapse via its interactions with CD6. Mediates homotypic interactions with cells that express ALCAM. Mediates attachment of dendritic cells onto endothelial cells via homotypic interaction. Inhibits endothelial cell migration and promotes endothelial tube formation via homotypic interactions. Required for normal organization of the lymph vessel network. Required for normal hematopoietic stem cell engraftment in the bone marrow. Plays a role in hematopoiesis; required for normal numbers of hematopoietic stem cells in bone marrow. Promotes in vitro osteoblast proliferation and differentiation. Promotes neurite extension, axon growth and axon guidance; axons grow preferentially on surfaces that contain ALCAM. Mediates outgrowth and pathfinding for retinal ganglion cell axons. The protein is CD166 antigen (ALCAM) of Oryctolagus cuniculus (Rabbit).